Reading from the N-terminus, the 319-residue chain is Malate dehydrogenase (319 aa).

NAD(+)-binding positions include 10–15 (GAGNIG) and D34. The substrate site is built by R83 and R89. NAD(+) contacts are provided by residues N96 and 119–121 (ITN). Residues N121 and R152 each contribute to the substrate site. H176 (proton acceptor) is an active-site residue.

This sequence belongs to the LDH/MDH superfamily. MDH type 3 family.

The catalysed reaction is (S)-malate + NAD(+) = oxaloacetate + NADH + H(+). Functionally, catalyzes the reversible oxidation of malate to oxaloacetate. The chain is Malate dehydrogenase from Francisella novicida.